The sequence spans 321 residues: Beta-ketoacyl-[acyl-carrier-protein] synthase III (321 aa).

Catalysis depends on residues Cys-116 and His-248. The ACP-binding stretch occupies residues 249 to 253; sequence QANLR. Asn-278 is a catalytic residue.

This sequence belongs to the thiolase-like superfamily. FabH family. As to quaternary structure, homodimer.

It is found in the cytoplasm. It catalyses the reaction malonyl-[ACP] + acetyl-CoA + H(+) = 3-oxobutanoyl-[ACP] + CO2 + CoA. It functions in the pathway lipid metabolism; fatty acid biosynthesis. In terms of biological role, catalyzes the condensation reaction of fatty acid synthesis by the addition to an acyl acceptor of two carbons from malonyl-ACP. Catalyzes the first condensation reaction which initiates fatty acid synthesis and may therefore play a role in governing the total rate of fatty acid production. Possesses both acetoacetyl-ACP synthase and acetyl transacylase activities. Its substrate specificity determines the biosynthesis of branched-chain and/or straight-chain of fatty acids. The sequence is that of Beta-ketoacyl-[acyl-carrier-protein] synthase III from Yersinia enterocolitica serotype O:8 / biotype 1B (strain NCTC 13174 / 8081).